A 309-amino-acid chain; its full sequence is MTSPVPIAVVGPTATGKSDLALDLAERLGGEIVNIDAMQLYRGMDIGTAKLAPAERRGIPHHQLDVLDVTETATVANYQQAAVRDVEGIAARGAVPVIVGGSMMYVQSLLDEWSFPATDASVRARWEAVLAEKGVAAVHAELGRVDPEAAASILPTDGRRLVRALEVVEITGKPFAASAPRIGEPRWGTHIVGVDRDTAELDDRIRLRTRLMFERGLVDEVRGLIDVGLREGVTAPRAIGYAQVLAWLDGEYDLDEAQERTFIGTRRYVRRQRSWFRRDTRIHWVDGSDPDLADTTIRTLGETRRMGER.

11–18 lines the ATP pocket; that stretch reads GPTATGKS. Residue 13–18 coordinates substrate; that stretch reads TATGKS.

This sequence belongs to the IPP transferase family. As to quaternary structure, monomer. It depends on Mg(2+) as a cofactor.

The catalysed reaction is adenosine(37) in tRNA + dimethylallyl diphosphate = N(6)-dimethylallyladenosine(37) in tRNA + diphosphate. Functionally, catalyzes the transfer of a dimethylallyl group onto the adenine at position 37 in tRNAs that read codons beginning with uridine, leading to the formation of N6-(dimethylallyl)adenosine (i(6)A). The polypeptide is tRNA dimethylallyltransferase (Rhodococcus jostii (strain RHA1)).